The sequence spans 100 residues: MKISEEEVRHVANLSKLRFSDQETKEFASSLSKIVDMIELLNEVDTEGVPVTTTMADRKTVMREDIAQPGHNRDDLFKNVPQHQDYYIKVPAILEDGGDA.

It belongs to the GatC family. In terms of assembly, heterotrimer of A, B and C subunits.

The catalysed reaction is L-glutamyl-tRNA(Gln) + L-glutamine + ATP + H2O = L-glutaminyl-tRNA(Gln) + L-glutamate + ADP + phosphate + H(+). The enzyme catalyses L-aspartyl-tRNA(Asn) + L-glutamine + ATP + H2O = L-asparaginyl-tRNA(Asn) + L-glutamate + ADP + phosphate + 2 H(+). Functionally, allows the formation of correctly charged Asn-tRNA(Asn) or Gln-tRNA(Gln) through the transamidation of misacylated Asp-tRNA(Asn) or Glu-tRNA(Gln) in organisms which lack either or both of asparaginyl-tRNA or glutaminyl-tRNA synthetases. The reaction takes place in the presence of glutamine and ATP through an activated phospho-Asp-tRNA(Asn) or phospho-Glu-tRNA(Gln). The chain is Aspartyl/glutamyl-tRNA(Asn/Gln) amidotransferase subunit C from Streptococcus agalactiae serotype Ia (strain ATCC 27591 / A909 / CDC SS700).